The chain runs to 297 residues: tRNA pseudouridine synthase B (297 aa).

The active-site Nucleophile is the Asp39.

Belongs to the pseudouridine synthase TruB family. Type 1 subfamily.

It carries out the reaction uridine(55) in tRNA = pseudouridine(55) in tRNA. Functionally, responsible for synthesis of pseudouridine from uracil-55 in the psi GC loop of transfer RNAs. This chain is tRNA pseudouridine synthase B, found in Lactobacillus johnsonii (strain CNCM I-12250 / La1 / NCC 533).